The sequence spans 391 residues: 3-ketoacyl-CoA thiolase (391 aa).

The Acyl-thioester intermediate role is filled by Cys95. Residues His347 and Cys377 each act as proton acceptor in the active site.

Belongs to the thiolase-like superfamily. Thiolase family. As to quaternary structure, heterotetramer of two alpha chains (FadB) and two beta chains (FadA).

The protein localises to the cytoplasm. It catalyses the reaction an acyl-CoA + acetyl-CoA = a 3-oxoacyl-CoA + CoA. Its pathway is lipid metabolism; fatty acid beta-oxidation. Functionally, catalyzes the final step of fatty acid oxidation in which acetyl-CoA is released and the CoA ester of a fatty acid two carbons shorter is formed. In Alcanivorax borkumensis (strain ATCC 700651 / DSM 11573 / NCIMB 13689 / SK2), this protein is 3-ketoacyl-CoA thiolase.